Consider the following 629-residue polypeptide: Arginyl-tRNA--protein transferase 1 (629 aa).

2 disordered regions span residues Gln-274–Pro-298 and Pro-353–Glu-405. The segment covering Thr-282–Thr-295 has biased composition (low complexity). Residues Ser-356–Asn-396 show a composition bias toward acidic residues.

Belongs to the R-transferase family.

The catalysed reaction is an N-terminal L-alpha-aminoacyl-[protein] + L-arginyl-tRNA(Arg) = an N-terminal L-arginyl-L-aminoacyl-[protein] + tRNA(Arg) + H(+). In terms of biological role, involved in the post-translational conjugation of arginine to the N-terminal aspartate or glutamate of a protein. This arginylation is required for degradation of the protein via the ubiquitin pathway. Does not arginylate cysteine residues. In Dictyostelium discoideum (Social amoeba), this protein is Arginyl-tRNA--protein transferase 1 (ate1).